A 90-amino-acid chain; its full sequence is Protein Z600 (90 aa).

Phosphothreonine occurs at positions 22 and 48. The segment at 46-65 (PATPSSSGHGKFQTELKKRR) is disordered.

Component of the Frs-CycA-Cdk1 complex composed of Z600, CycA and Cdk1. Interacts preferentially with CycA (via C-terminus) but is also able to interact (via C-terminus) with CycE (via C-terminus).

The protein localises to the nucleus. Its function is as follows. Cell cycle regulator that is involved in modulating and adjusting cell proliferation according to the requirements of the developmental program. Interacts with mitotic Cdk1-cyclin complexes to inhibit mitotic entry at the G2/M transition. Likely to function by binding to the hydrophobic patch of cyclins to interfere with the interaction between the complex and certain Cdk1 substrates. At the mid-blastula transition, involved in the cell cycle arrest in G2 of cycle 14 by delaying mitosis and thus reducing cell proliferation allowing cell fate specification and morphogenesis to take place. Acts downstream or in parallel to the checkpoint regulator grp which is also required for the cell cycle pause at cycle 14. During gastrulation, delays mitosis in the ventral region of the embryonic mesoderm thus allowing invagination to be completed before cell division takes place. This is Protein Z600 from Drosophila melanogaster (Fruit fly).